Here is a 310-residue protein sequence, read N- to C-terminus: MTEVDFDVAIIGAGPAGMTAAVYASRANLKTVMIERGMPGGQMANTEEVENFPGFEMITGPDLSTKMFEHAKKFGAEYQYGDIKSVEDKGDYKVINLGNKEITAHAVIISTGAEYKKIGVPGEQELGGRGVSYCAVCDGAFFKNKRLFVIGGGDSAVEEGTFLTKFADKVTIVHRRDELRAQNILQERAFKNDKVDFIWSHTLKTINEKDGKVGSVTLESTKDGAEQTYDADGVFIYIGMKPLTAPFKNLGITNDAGYIVTQDDMSTKVRGIFAAGDVRDKGLRQIVTATGDGSIAAQSAADYITELKDN.

35–42 (ERGMPGGQ) is a binding site for FAD. Cys134 and Cys137 form a disulfide bridge. 277 to 286 (DVRDKGLRQI) contributes to the FAD binding site.

The protein belongs to the class-II pyridine nucleotide-disulfide oxidoreductase family. In terms of assembly, homodimer. FAD is required as a cofactor.

The protein resides in the cytoplasm. The enzyme catalyses [thioredoxin]-dithiol + NADP(+) = [thioredoxin]-disulfide + NADPH + H(+). The polypeptide is Thioredoxin reductase (trxB) (Staphylococcus epidermidis (strain ATCC 35984 / DSM 28319 / BCRC 17069 / CCUG 31568 / BM 3577 / RP62A)).